A 393-amino-acid polypeptide reads, in one-letter code: NAD(P)H-quinone oxidoreductase subunit H, chloroplastic (393 aa).

This sequence belongs to the complex I 49 kDa subunit family. NDH is composed of at least 16 different subunits, 5 of which are encoded in the nucleus.

It is found in the plastid. Its subcellular location is the chloroplast thylakoid membrane. It carries out the reaction a plastoquinone + NADH + (n+1) H(+)(in) = a plastoquinol + NAD(+) + n H(+)(out). The enzyme catalyses a plastoquinone + NADPH + (n+1) H(+)(in) = a plastoquinol + NADP(+) + n H(+)(out). Its function is as follows. NDH shuttles electrons from NAD(P)H:plastoquinone, via FMN and iron-sulfur (Fe-S) centers, to quinones in the photosynthetic chain and possibly in a chloroplast respiratory chain. The immediate electron acceptor for the enzyme in this species is believed to be plastoquinone. Couples the redox reaction to proton translocation, and thus conserves the redox energy in a proton gradient. The sequence is that of NAD(P)H-quinone oxidoreductase subunit H, chloroplastic from Nicotiana tomentosiformis (Tobacco).